A 251-amino-acid chain; its full sequence is MGARASGGPLARAGLLLLLLLLLLLGLLAPGAQGARGRGGAEKNSYRRTVNTFSQSVSSLFGEDNVRAAQKFLARLTERFVLGVDMFVETLWKVWTELLDVLGLDVSNLSQYFSPASVSSSPARALLLVGVVLLAYWFLSLTLGFTFSVLHVVFGRFFWIVRVVLFSMSCVYILHKYEGEPENAVLPLCFVVAVYFMTGPMGFYWRSSPSGPSNPSNPSVEEKLEHLEKQVRLLNIRLNRVLESLDRSKDK.

Helical transmembrane passes span 13–33, 125–145, 146–166, and 185–205; these read AGLLLLLLLLLLLGLLAPGAQ, ALLLVGVVLLAYWFLSLTLGF, TFSVLHVVFGRFFWIVRVVLF, and VLPLCFVVAVYFMTGPMGFYW. Residues 217–247 adopt a coiled-coil conformation; it reads NPSVEEKLEHLEKQVRLLNIRLNRVLESLDR. Lys229 carries the N6-acetyllysine modification. The residue at position 248 (Ser248) is a Phosphoserine.

As to quaternary structure, interacts with LETMD1. Interacts with BRI3 (isoforms 1 and 2); the interaction with isoform 2 is weaker than with isoform 1. Interacts with BRI3; the interaction is weak. Interacts with TMEM238L. As to expression, most abundantly expressed in brain, liver and kidney. Overexpressed in leukemia and lymphoma cell lines, as well as in various carcinomas.

It localises to the mitochondrion outer membrane. Functionally, involved in tumorigenesis and may function by stabilizing p53/TP53. The protein is BRI3-binding protein of Homo sapiens (Human).